The following is a 312-amino-acid chain: Malate dehydrogenase (312 aa).

NAD(+)-binding positions include 7-13 (GAAGGIG) and Asp34. Arg81 and Arg87 together coordinate substrate. Residues Asn94 and 117–119 (ITN) contribute to the NAD(+) site. Positions 119 and 153 each coordinate substrate. His177 serves as the catalytic Proton acceptor. Residue Met227 participates in NAD(+) binding.

The protein belongs to the LDH/MDH superfamily. MDH type 1 family. Homodimer.

The enzyme catalyses (S)-malate + NAD(+) = oxaloacetate + NADH + H(+). In terms of biological role, catalyzes the reversible oxidation of malate to oxaloacetate. This Escherichia coli O6:K15:H31 (strain 536 / UPEC) protein is Malate dehydrogenase.